The chain runs to 506 residues: Tabersonine 3-oxygenase (506 aa).

The Lumenal segment spans residues 1–5 (MEFHE). The chain crosses the membrane as a helical span at residues 6–26 (SSPFVFITRGFIFIAISIAVL). The Cytoplasmic segment spans residues 27–506 (RRIISKKTKT…DLQLIATSYA (480 aa)). Heme is bound at residue Cys450.

Belongs to the cytochrome P450 family. Heme serves as cofactor. Expressed in leaf epidermis.

The protein localises to the endoplasmic reticulum membrane. The enzyme catalyses 16-methoxytabersonine + reduced [NADPH--hemoprotein reductase] + O2 = (3R)-1,2-didehydro-3-hydroxy-16-methoxy-2,3-dihydrotabersonine + oxidized [NADPH--hemoprotein reductase] + H2O + H(+). It catalyses the reaction (-)-tabersonine + reduced [NADPH--hemoprotein reductase] + O2 = (3R)-1,2-didehydro-3-hydroxy-2,3-dihydrotabersonine + oxidized [NADPH--hemoprotein reductase] + H2O + H(+). The protein operates within alkaloid biosynthesis; vindoline biosynthesis. Its function is as follows. Cytochrome P450 catalyzing the monooxygenation of 16-methoxytabersonine, 16-hydroxytabersonine and tabersonine, but not of 2,3-dihydrotabersonine. Converts the C2,C3 alkene of tabersonine and 16-methoxytabersonine to the epoxides, which then spontaneously open to form the corresponding imine alcohols. Inactive in converting amyrin to ursolic acid. The protein is Tabersonine 3-oxygenase of Catharanthus roseus (Madagascar periwinkle).